A 350-amino-acid polypeptide reads, in one-letter code: tRNA uridine(34) hydroxylase (350 aa).

The Rhodanese domain occupies 146 to 240 (DDPDAVFIDM…YARRAREQGL (95 aa)). The Cysteine persulfide intermediate role is filled by C200. A compositionally biased stretch (basic and acidic residues) spans 319–328 (RRRRAGRENG). A disordered region spans residues 319-350 (RRRRAGRENGNKIFNKSRGRLNSKLSIPDPAE).

It belongs to the TrhO family.

The enzyme catalyses uridine(34) in tRNA + AH2 + O2 = 5-hydroxyuridine(34) in tRNA + A + H2O. Functionally, catalyzes oxygen-dependent 5-hydroxyuridine (ho5U) modification at position 34 in tRNAs. The protein is tRNA uridine(34) hydroxylase of Salmonella dublin (strain CT_02021853).